Reading from the N-terminus, the 253-residue chain is 3-deoxy-manno-octulosonate cytidylyltransferase (253 aa).

Belongs to the KdsB family.

The protein resides in the cytoplasm. It carries out the reaction 3-deoxy-alpha-D-manno-oct-2-ulosonate + CTP = CMP-3-deoxy-beta-D-manno-octulosonate + diphosphate. The protein operates within nucleotide-sugar biosynthesis; CMP-3-deoxy-D-manno-octulosonate biosynthesis; CMP-3-deoxy-D-manno-octulosonate from 3-deoxy-D-manno-octulosonate and CTP: step 1/1. It participates in bacterial outer membrane biogenesis; lipopolysaccharide biosynthesis. Its function is as follows. Activates KDO (a required 8-carbon sugar) for incorporation into bacterial lipopolysaccharide in Gram-negative bacteria. The protein is 3-deoxy-manno-octulosonate cytidylyltransferase of Neisseria meningitidis serogroup A / serotype 4A (strain DSM 15465 / Z2491).